The sequence spans 662 residues: NADH-ubiquinone oxidoreductase chain 5 (662 aa).

16 helical membrane passes run 40 to 62 (AALS…IVIG), 77 to 99 (LFDS…VHLY), 112 to 129 (RFFS…VLVA), 133 to 155 (YFIM…NFWY), 168 to 190 (LTVN…WVFG), 200 to 222 (VAPY…GAMA), 243 to 262 (VSAL…LMLR), 272 to 294 (TVLV…TGLL), 301 to 320 (VIAY…VGLS), 325 to 347 (ALFH…GAVI), 360 to 382 (GGLV…SLMA), 408 to 430 (TIAY…RLVS), 450 to 472 (APMI…GYIA), 510 to 529 (LLPA…LYHV), 609 to 631 (GVIT…LVFA), and 636 to 658 (VFNE…LPSS).

It belongs to the complex I subunit 5 family.

Its subcellular location is the mitochondrion inner membrane. The catalysed reaction is a ubiquinone + NADH + 5 H(+)(in) = a ubiquinol + NAD(+) + 4 H(+)(out). Its function is as follows. Core subunit of the mitochondrial membrane respiratory chain NADH dehydrogenase (Complex I) that is believed to belong to the minimal assembly required for catalysis. Complex I functions in the transfer of electrons from NADH to the respiratory chain. The immediate electron acceptor for the enzyme is believed to be ubiquinone. This Cryptococcus neoformans var. grubii serotype A (strain H99 / ATCC 208821 / CBS 10515 / FGSC 9487) (Filobasidiella neoformans var. grubii) protein is NADH-ubiquinone oxidoreductase chain 5 (ND5).